Consider the following 206-residue polypeptide: MARYLGPKCRLSRREKTDLQLKSGIRAIDSKCNIERIPGMHWQRRGRTTDYGVQLRMKQMIKRYYDVLEKQFANYYKQADRLKGSTGDNLLKLLESRLDNVVYRMGFAATRAEARQLISHKAILVNGEVVNIPSYQVKPGDIIEVRSRAKGQLRIKGALELAQQRAPISWIEVDTKKMTGTFKEQPDVAELPAEFKVNLVVELYSK.

In terms of domain architecture, S4 RNA-binding spans 96-158; sequence SRLDNVVYRM…AKGQLRIKGA (63 aa).

Belongs to the universal ribosomal protein uS4 family. Part of the 30S ribosomal subunit. Contacts protein S5. The interaction surface between S4 and S5 is involved in control of translational fidelity.

Its function is as follows. One of the primary rRNA binding proteins, it binds directly to 16S rRNA where it nucleates assembly of the body of the 30S subunit. Functionally, with S5 and S12 plays an important role in translational accuracy. The protein is Small ribosomal subunit protein uS4 of Coxiella burnetii (strain CbuG_Q212) (Coxiella burnetii (strain Q212)).